The chain runs to 239 residues: Purine nucleoside phosphorylase DeoD-type (239 aa).

Residue H5 participates in a purine D-ribonucleoside binding. Residues G21, R25, R44, and 88 to 91 (RVGS) contribute to the phosphate site. A purine D-ribonucleoside contacts are provided by residues 180 to 182 (EME) and 204 to 205 (SD). D205 acts as the Proton donor in catalysis.

It belongs to the PNP/UDP phosphorylase family. In terms of assembly, homohexamer; trimer of homodimers.

It catalyses the reaction a purine D-ribonucleoside + phosphate = a purine nucleobase + alpha-D-ribose 1-phosphate. The catalysed reaction is a purine 2'-deoxy-D-ribonucleoside + phosphate = a purine nucleobase + 2-deoxy-alpha-D-ribose 1-phosphate. Its function is as follows. Catalyzes the reversible phosphorolytic breakdown of the N-glycosidic bond in the beta-(deoxy)ribonucleoside molecules, with the formation of the corresponding free purine bases and pentose-1-phosphate. This Salmonella choleraesuis (strain SC-B67) protein is Purine nucleoside phosphorylase DeoD-type.